Reading from the N-terminus, the 528-residue chain is Atypical kinase COQ8B, mitochondrial (528 aa).

The chain crosses the membrane as a helical span at residues 93–109; sequence LASFGGLAVGLGLGALA. Residues 151 to 154 carry the KxGQ motif motif; that stretch reads KIGQ. The Protein kinase domain occupies 187–419; the sequence is MMKVLEEELG…DRVLQKSQDL (233 aa). Residues 212–215 carry the AAAS motif motif; it reads AAAS. ATP is bound by residues Ser215, Lys233, and 320–323; that span reads MELA. The Proton acceptor role is filled by Asp363. Positions 368 and 382 each coordinate ATP.

It belongs to the protein kinase superfamily. ADCK protein kinase family. Homodimer; homodimerizes via its transmembrane region. Interacts with COQ6 and COQ7. Interacts with the multi-subunit COQ enzyme complex, composed of at least COQ3, COQ4, COQ5, COQ6, COQ7 and COQ9. As to expression, in the kidney, expressed in glomeruli, predominantly in podocyte foot precesses, as well as in proximal tubules and collecting ducts (at protein level).

The protein resides in the mitochondrion membrane. The protein localises to the cytoplasm. Its subcellular location is the cytosol. It is found in the cell membrane. The protein operates within cofactor biosynthesis; ubiquinone biosynthesis. Atypical kinase involved in the biosynthesis of coenzyme Q, also named ubiquinone, an essential lipid-soluble electron transporter for aerobic cellular respiration. Its substrate specificity is still unclear: may act as a protein kinase that mediates phosphorylation of COQ3. According to other reports, acts as a small molecule kinase, possibly a lipid kinase that phosphorylates a prenyl lipid in the ubiquinone biosynthesis pathway, as suggested by its ability to bind coenzyme Q lipid intermediates. However, the small molecule kinase activity was not confirmed by another publication. Required for podocyte migration. This Rattus norvegicus (Rat) protein is Atypical kinase COQ8B, mitochondrial.